The primary structure comprises 588 residues: Protein kinase C iota type (588 aa).

Positions 18–101 (QVRVKAYYRG…SELIIHVFPC (84 aa)) constitute a PB1 domain. A Phorbol-ester/DAG-type zinc finger spans residues 133–183 (GHAFQAKRFNRRAHCAICTDRIWGLGRQGYKCINCKLLVHKKCHKLVTVEC). The tract at residues 194-213 (GRIDPGSTHPEHPDQVLGKK) is disordered. A Protein kinase domain is found at 246 to 514 (FDLLRVIGRG…FADIMAHPFF (269 aa)). ATP is bound by residues 252-260 (IGRGSYAKV) and Lys-275. The active-site Proton acceptor is the Asp-370. Phosphothreonine is present on residues Thr-404 and Thr-556. In terms of domain architecture, AGC-kinase C-terminal spans 515 to 586 (RNVDWDLMEQ…INPLLMSAEE (72 aa)).

The protein belongs to the protein kinase superfamily. AGC Ser/Thr protein kinase family. PKC subfamily.

It catalyses the reaction L-seryl-[protein] + ATP = O-phospho-L-seryl-[protein] + ADP + H(+). It carries out the reaction L-threonyl-[protein] + ATP = O-phospho-L-threonyl-[protein] + ADP + H(+). With respect to regulation, exhibits an elevated basal enzymatic activity and is not regulated by diacylglycerol, phosphatidylserine, phorbol esters or calcium ions. Two specific sites, Thr-404 (activation loop of the kinase domain) and Thr-556 (turn motif), need to be phosphorylated for its full activation. In terms of biological role, calcium- and diacylglycerol-independent serine/ threonine-protein kinase that plays a general protective role against apoptotic stimuli, is involved in NF-kappa-B activation, cell survival, differentiation and polarity, and contributes to the regulation of microtubule dynamics in the early secretory pathway. Is required for the formation and maintenance of the zonula adherens during early epithelial development and plays a critical role in organ morphogenesis and in regulating the orientation of cell division. Required for polarized epithelial organization, myocardium coherence and cell connectivity in the early somite stages. Required for heart cone tilt and development of circulatory architecture during embryogenesis. This is Protein kinase C iota type (prkci) from Danio rerio (Zebrafish).